Here is a 94-residue protein sequence, read N- to C-terminus: DNA-directed RNA polymerase subunit omega (94 aa).

It belongs to the RNA polymerase subunit omega family. In terms of assembly, the RNAP catalytic core consists of 2 alpha, 1 beta, 1 beta' and 1 omega subunit. When a sigma factor is associated with the core the holoenzyme is formed, which can initiate transcription.

It carries out the reaction RNA(n) + a ribonucleoside 5'-triphosphate = RNA(n+1) + diphosphate. Promotes RNA polymerase assembly. Latches the N- and C-terminal regions of the beta' subunit thereby facilitating its interaction with the beta and alpha subunits. The polypeptide is DNA-directed RNA polymerase subunit omega (Tolumonas auensis (strain DSM 9187 / NBRC 110442 / TA 4)).